A 190-amino-acid chain; its full sequence is Elongation factor P (190 aa).

The protein belongs to the elongation factor P family.

It localises to the cytoplasm. It participates in protein biosynthesis; polypeptide chain elongation. Involved in peptide bond synthesis. Stimulates efficient translation and peptide-bond synthesis on native or reconstituted 70S ribosomes in vitro. Probably functions indirectly by altering the affinity of the ribosome for aminoacyl-tRNA, thus increasing their reactivity as acceptors for peptidyl transferase. This Pseudomonas fluorescens (strain ATCC BAA-477 / NRRL B-23932 / Pf-5) protein is Elongation factor P.